A 347-amino-acid chain; its full sequence is Quinolinate synthase (347 aa).

Iminosuccinate-binding residues include H47 and S68. Position 113 (C113) interacts with [4Fe-4S] cluster. Residues 139–141 and S156 each bind iminosuccinate; that span reads YAN. C200 contacts [4Fe-4S] cluster. Residues 226-228 and T243 each bind iminosuccinate; that span reads HPE. C297 contacts [4Fe-4S] cluster.

Belongs to the quinolinate synthase family. Type 1 subfamily. The cofactor is [4Fe-4S] cluster.

It is found in the cytoplasm. It catalyses the reaction iminosuccinate + dihydroxyacetone phosphate = quinolinate + phosphate + 2 H2O + H(+). Its pathway is cofactor biosynthesis; NAD(+) biosynthesis; quinolinate from iminoaspartate: step 1/1. In terms of biological role, catalyzes the condensation of iminoaspartate with dihydroxyacetone phosphate to form quinolinate. The chain is Quinolinate synthase from Shigella flexneri serotype 5b (strain 8401).